The sequence spans 294 residues: Tetraspanin-15 (294 aa).

The Cytoplasmic portion of the chain corresponds to 1–23 (MPRGDSEQVRYCARFSYLWLKFS). The helical transmembrane segment at 24-44 (LVIYSTVFWLIGGLVLSVGIY) threads the bilayer. Residues 45–62 (AEVERQKYKTLESAFLAP) are Extracellular-facing. Residues 63–83 (AIILILLGVVMFIVSFIGVLA) form a helical membrane-spanning segment. Residues 84 to 93 (SLRDNLCLLQ) are Cytoplasmic-facing. A helical transmembrane segment spans residues 94 to 114 (AFMYILGICLIIELIGGVVAL). Residues 115 to 235 (IFRNQTIDFL…WFTDNYTIMA (121 aa)) are Extracellular-facing. Residue Asn-118 is glycosylated (N-linked (GlcNAc...) asparagine). 4 cysteine pairs are disulfide-bonded: Cys-154–Cys-219, Cys-155–Cys-185, Cys-171–Cys-179, and Cys-186–Cys-198. N-linked (GlcNAc...) asparagine glycans are attached at residues Asn-189 and Asn-230. A helical transmembrane segment spans residues 236–256 (GVLLGILLPQFLGVLLTFLYI). Over 257–294 (TRVEDIITEHSVTDGLLGPGTKAGVEAAGTGCCMCYPI) the chain is Cytoplasmic.

This sequence belongs to the tetraspanin (TM4SF) family. In terms of assembly, interacts with ADAM10; the interaction influences ADAM10 substrate specificity, endocytosis and turnover. Palmitoylated.

It is found in the cell membrane. The protein resides in the late endosome membrane. In terms of biological role, part of TspanC8 subgroup, composed of 6 members that interact with the transmembrane metalloprotease ADAM10. This interaction is required for ADAM10 exit from the endoplasmic reticulum and for enzymatic maturation and trafficking to the cell surface as well as substrate specificity. Different TspanC8/ADAM10 complexes have distinct substrates. Promotes ADAM10-mediated cleavage of CDH2. Negatively regulates ligand-induced Notch activity probably by regulating ADAM10 activity. This is Tetraspanin-15 (TSPAN15) from Bos taurus (Bovine).